The following is a 304-amino-acid chain: Non-specific ribonucleoside hydrolase RihC (304 aa).

The active site involves His233.

This sequence belongs to the IUNH family. RihC subfamily.

Hydrolyzes both purine and pyrimidine ribonucleosides with a broad-substrate specificity. The polypeptide is Non-specific ribonucleoside hydrolase RihC (Escherichia coli O17:K52:H18 (strain UMN026 / ExPEC)).